The primary structure comprises 671 residues: MESIEQQLTELRTTLRHHEYLYHVMDAPEIPDAEYDRLMRELRELETKHPELITPDSPTQRVGAAPLAAFSQIRHEVPMLSLDNVFDEESFLAFNKRVQDRLKSNEKVTWCCELKLDGLAVSILYENGVLVSAATRGDGTTGEDITSNVRTIRAIPLKLHGENIPARLEVRGEVFLPQAGFEKINEDARRTGGKVFANPRNAAAGSLRQLDPRITAKRPLTFFCYGVGVLEGGELPDTHLGRLLQFKQWGLPVSDRVTLCESAEEVLAFYHKVEEDRPTLGFDIDGVVIKVNSLAQQEQLGFVARAPRWAVAFKFPAQEQMTFVRDVEFQVGRTGAITPVARLEPVHVAGVLVSNATLHNADEIERLGLRIGDKVVIRRAGDVIPQVVNVVLSERPEDTREVVFPTHCPVCGSDVERVEGEAVARCTGGLICGAQRKESLKHFVSRRAMDVDGMGDKIIDQLVEKEYVHTPADLFKLTAGKLTGLERMGPKSAQNVVNALEKAKETTFARFLYALGIREVGEATAAGLAAYFGTLEALEAASIEELQKVPDVGIVVASHVHNFFAEESNRNVISELLAEGVHWPAPIVINAEEIDSPFAGKTVVLTGSLSQMSRDDAKARLVELGAKVAGSVSKKTDLVIAGEAAGSKLAKAQELGIEVIDEAEMLRLLGS.

NAD(+)-binding positions include 32–36 (DAEYD), 81–82 (SL), and Glu113. The N6-AMP-lysine intermediate role is filled by Lys115. NAD(+) contacts are provided by Arg136, Glu173, Lys290, and Lys314. Cys408, Cys411, Cys426, and Cys432 together coordinate Zn(2+). In terms of domain architecture, BRCT spans 593–671 (EIDSPFAGKT…EAEMLRLLGS (79 aa)).

Belongs to the NAD-dependent DNA ligase family. LigA subfamily. The cofactor is Mg(2+). Requires Mn(2+) as cofactor.

The enzyme catalyses NAD(+) + (deoxyribonucleotide)n-3'-hydroxyl + 5'-phospho-(deoxyribonucleotide)m = (deoxyribonucleotide)n+m + AMP + beta-nicotinamide D-nucleotide.. Its function is as follows. DNA ligase that catalyzes the formation of phosphodiester linkages between 5'-phosphoryl and 3'-hydroxyl groups in double-stranded DNA using NAD as a coenzyme and as the energy source for the reaction. It is essential for DNA replication and repair of damaged DNA. The chain is DNA ligase from Escherichia coli O9:H4 (strain HS).